The following is a 208-amino-acid chain: V-type ATP synthase subunit D (208 aa).

The protein belongs to the V-ATPase D subunit family.

Its function is as follows. Produces ATP from ADP in the presence of a proton gradient across the membrane. This is V-type ATP synthase subunit D from Chlamydia felis (strain Fe/C-56) (Chlamydophila felis).